The chain runs to 328 residues: Cytochrome c biogenesis protein CcsA (328 aa).

8 consecutive transmembrane segments (helical) span residues 13-33 (ISFS…LVNL), 46-66 (GIII…IFSG), 73-93 (LYES…ISFF), 101-121 (LNAI…SGLL), 146-166 (MVLG…LLVI), 234-254 (IISL…VWAN), 263-283 (WDPK…YLHI), and 295-315 (AIVA…VNLL).

It belongs to the CcmF/CycK/Ccl1/NrfE/CcsA family. As to quaternary structure, may interact with Ccs1.

It localises to the plastid. The protein resides in the chloroplast thylakoid membrane. Required during biogenesis of c-type cytochromes (cytochrome c6 and cytochrome f) at the step of heme attachment. The chain is Cytochrome c biogenesis protein CcsA from Aethionema grandiflorum (Persian stone-cress).